Reading from the N-terminus, the 207-residue chain is Casparian strip membrane protein 3 (207 aa).

The Cytoplasmic segment spans residues 1–45 (MDSTKSTEETAINIPRESSSTKHKIAVAAVKAVATPHKRGGMKRG). The helical transmembrane segment at 46–66 (VAIFDFILRICALAAALAATA) threads the bilayer. Over 67-95 (TMGTTDQTLPFFTQFFQFQASYDDLPTFT) the chain is Extracellular. Residues 96–116 (FFVIANAIASGYLVLSLPFSI) traverse the membrane as a helical segment. Over 117-128 (VAIVRPHVTGVK) the chain is Cytoplasmic. Residues 129–149 (LLLLILDTVLVAFTTAAAASA) form a helical membrane-spanning segment. Residues 150–181 (AAIVYLAHNGNSNTNWFAICQQFNDFCQRTSG) lie on the Extracellular side of the membrane. The helical transmembrane segment at 182-202 (AVVASFIAAAIFIFLVVLSAV) threads the bilayer. Residues 203 to 207 (ALRRH) lie on the Cytoplasmic side of the membrane.

It belongs to the Casparian strip membrane proteins (CASP) family. As to quaternary structure, homodimer and heterodimers.

It localises to the cell membrane. Its function is as follows. Regulates membrane-cell wall junctions and localized cell wall deposition. Required for establishment of the Casparian strip membrane domain (CSD) and the subsequent formation of Casparian strips, a cell wall modification of the root endodermis that determines an apoplastic barrier between the intraorganismal apoplasm and the extraorganismal apoplasm and prevents lateral diffusion. This chain is Casparian strip membrane protein 3, found in Erythranthe guttata (Yellow monkey flower).